The chain runs to 237 residues: Ribonuclease PH (237 aa).

Phosphate is bound by residues Arg86 and 124 to 126 (GTR).

Belongs to the RNase PH family. In terms of assembly, homohexameric ring arranged as a trimer of dimers.

It carries out the reaction tRNA(n+1) + phosphate = tRNA(n) + a ribonucleoside 5'-diphosphate. In terms of biological role, phosphorolytic 3'-5' exoribonuclease that plays an important role in tRNA 3'-end maturation. Removes nucleotide residues following the 3'-CCA terminus of tRNAs; can also add nucleotides to the ends of RNA molecules by using nucleoside diphosphates as substrates, but this may not be physiologically important. Probably plays a role in initiation of 16S rRNA degradation (leading to ribosome degradation) during starvation. The polypeptide is Ribonuclease PH (Erythrobacter litoralis (strain HTCC2594)).